We begin with the raw amino-acid sequence, 822 residues long: uncharacterized protein (822 aa).

Residues 1–230 are disordered; it reads MARGKRSTQR…NAAPLNKTDA (230 aa). Position 27 is a phosphoserine (serine 27). Basic residues predominate over residues 34–44; that stretch reads SKAKKNKKKLN. Serine 47, serine 51, and serine 55 each carry phosphoserine. A Phosphotyrosine modification is found at tyrosine 57. The segment covering 61-70 has biased composition (acidic residues); that stretch reads PEDDEVDEEV. Positions 73-85 are enriched in basic residues; it reads VKKKPSKKSKKAK. A compositionally biased stretch (acidic residues) spans 92 to 106; it reads FADEQSVEEEEEEDS. Phosphoserine is present on serine 97. Positions 111–121 are enriched in basic residues; the sequence is RKNKKSSKKAS. Composition is skewed to acidic residues over residues 129-144 and 163-172; these read LADD…EESE and SEALDDGDIE. Phosphoserine is present on residues serine 137 and serine 163. 2 ABC transporter domains span residues 276-519 and 594-809; these read LQVE…VQLA and IKFQ…AKER. Residues 308–315 and 627–634 contribute to the ATP site; these read APNGSGKS and GPNGAGKT.

This sequence belongs to the ABC transporter superfamily.

Its subcellular location is the cytoplasm. This is an uncharacterized protein from Schizosaccharomyces pombe (strain 972 / ATCC 24843) (Fission yeast).